The primary structure comprises 188 residues: Ribosome-recycling factor (188 aa).

The protein belongs to the RRF family.

It localises to the cytoplasm. Responsible for the release of ribosomes from messenger RNA at the termination of protein biosynthesis. May increase the efficiency of translation by recycling ribosomes from one round of translation to another. This chain is Ribosome-recycling factor, found in Phenylobacterium zucineum (strain HLK1).